A 224-amino-acid chain; its full sequence is Putative O-methyltransferase MT1258 (224 aa).

Basic and acidic residues predominate over residues 1 to 10; sequence MDGTPGHDDM. The tract at residues 1–21 is disordered; sequence MDGTPGHDDMPGQPAPSRGES. S-adenosyl-L-methionine is bound by residues V51, E73, 75-76, S81, D99, and I100; that span reads GT. Substrate is bound at residue D147. D149 is a binding site for S-adenosyl-L-methionine.

The protein belongs to the class I-like SAM-binding methyltransferase superfamily. Cation-dependent O-methyltransferase family.

This is Putative O-methyltransferase MT1258 from Mycobacterium tuberculosis (strain CDC 1551 / Oshkosh).